We begin with the raw amino-acid sequence, 759 residues long: Protein YdeP (759 aa).

[4Fe-4S] cluster-binding residues include cysteine 49 and cysteine 52.

It belongs to the prokaryotic molybdopterin-containing oxidoreductase family. Requires [4Fe-4S] cluster as cofactor. It depends on Mo-bis(molybdopterin guanine dinucleotide) as a cofactor.

Probably involved in acid resistance. This chain is Protein YdeP (ydeP), found in Escherichia coli O6:H1 (strain CFT073 / ATCC 700928 / UPEC).